A 65-amino-acid chain; its full sequence is Large ribosomal subunit protein bL35 (65 aa).

Residues 1–23 (MPKIKTNRGAAKRFKKTGTGKVK) form a disordered region. Basic residues predominate over residues 10 to 23 (AAKRFKKTGTGKVK).

Belongs to the bacterial ribosomal protein bL35 family.

The sequence is that of Large ribosomal subunit protein bL35 from Trichlorobacter lovleyi (strain ATCC BAA-1151 / DSM 17278 / SZ) (Geobacter lovleyi).